The sequence spans 506 residues: Probable alpha-L-arabinofuranosidase B (506 aa).

The first 26 residues, 1 to 26 (MLSQPSRERAFVLALGLVVSSSLAAA), serve as a signal peptide directing secretion. Residues 27–343 (APCDIYSSGG…ADIVAANYAV (317 aa)) are catalytic. Cystine bridges form between C29/C39, C89/C94, and C184/C185. D227 is a binding site for substrate. E229 serves as the catalytic Nucleophile. A substrate-binding site is contributed by N230. An N-linked (GlcNAc...) asparagine glycan is attached at N285. Position 304 (G304) interacts with substrate. Residue D305 is the Proton donor of the active site. Positions 344–506 (TSLTSGPALT…VSWVISSGFA (163 aa)) are ABD. Cysteines 409 and 447 form a disulfide. H424, N426, F427, D443, H471, L476, and D496 together coordinate substrate.

It belongs to the glycosyl hydrolase 54 family.

Its subcellular location is the secreted. The catalysed reaction is Hydrolysis of terminal non-reducing alpha-L-arabinofuranoside residues in alpha-L-arabinosides.. Its pathway is glycan metabolism; L-arabinan degradation. In terms of biological role, alpha-L-arabinofuranosidase involved in the degradation of arabinoxylan, a major component of plant hemicellulose. Able to hydrolyze 1,5-, 1,3- and 1,2-alpha-linkages not only in L-arabinofuranosyl oligosaccharides, but also in polysaccharides containing terminal non-reducing L-arabinofuranoses in side chains, like L-arabinan, arabinogalactan and arabinoxylan. The sequence is that of Probable alpha-L-arabinofuranosidase B (abfB) from Aspergillus clavatus (strain ATCC 1007 / CBS 513.65 / DSM 816 / NCTC 3887 / NRRL 1 / QM 1276 / 107).